The chain runs to 319 residues: Acetyl-coenzyme A carboxylase carboxyl transferase subunit alpha (319 aa).

The CoA carboxyltransferase C-terminal domain occupies 32 to 293; that stretch reads NVETEVRALR…KAVLLNELDA (262 aa).

The protein belongs to the AccA family. Acetyl-CoA carboxylase is a heterohexamer composed of biotin carboxyl carrier protein (AccB), biotin carboxylase (AccC) and two subunits each of ACCase subunit alpha (AccA) and ACCase subunit beta (AccD).

Its subcellular location is the cytoplasm. The catalysed reaction is N(6)-carboxybiotinyl-L-lysyl-[protein] + acetyl-CoA = N(6)-biotinyl-L-lysyl-[protein] + malonyl-CoA. The protein operates within lipid metabolism; malonyl-CoA biosynthesis; malonyl-CoA from acetyl-CoA: step 1/1. In terms of biological role, component of the acetyl coenzyme A carboxylase (ACC) complex. First, biotin carboxylase catalyzes the carboxylation of biotin on its carrier protein (BCCP) and then the CO(2) group is transferred by the carboxyltransferase to acetyl-CoA to form malonyl-CoA. The protein is Acetyl-coenzyme A carboxylase carboxyl transferase subunit alpha of Xanthomonas oryzae pv. oryzae (strain MAFF 311018).